Here is a 400-residue protein sequence, read N- to C-terminus: Argininosuccinate synthase (400 aa).

ATP is bound by residues 10-18 (AYSGGVDTS) and Ala-38. Tyr-89 lines the L-citrulline pocket. Gly-119 is an ATP binding site. L-aspartate-binding residues include Thr-121, Asn-125, and Asp-126. Asn-125 lines the L-citrulline pocket. Residues Arg-129, Ser-177, Ser-186, Glu-262, and Tyr-274 each coordinate L-citrulline.

It belongs to the argininosuccinate synthase family. Type 1 subfamily. In terms of assembly, homotetramer.

It is found in the cytoplasm. It catalyses the reaction L-citrulline + L-aspartate + ATP = 2-(N(omega)-L-arginino)succinate + AMP + diphosphate + H(+). The protein operates within amino-acid biosynthesis; L-arginine biosynthesis; L-arginine from L-ornithine and carbamoyl phosphate: step 2/3. The polypeptide is Argininosuccinate synthase (Synechococcus elongatus (strain ATCC 33912 / PCC 7942 / FACHB-805) (Anacystis nidulans R2)).